The sequence spans 337 residues: tRNA-cytidine(32) 2-sulfurtransferase (337 aa).

The short motif at 71-76 (SGGKDS) is the PP-loop motif element. Residues Cys-146, Cys-149, and Cys-237 each coordinate [4Fe-4S] cluster.

Belongs to the TtcA family. In terms of assembly, homodimer. Mg(2+) is required as a cofactor. The cofactor is [4Fe-4S] cluster.

The protein resides in the cytoplasm. The catalysed reaction is cytidine(32) in tRNA + S-sulfanyl-L-cysteinyl-[cysteine desulfurase] + AH2 + ATP = 2-thiocytidine(32) in tRNA + L-cysteinyl-[cysteine desulfurase] + A + AMP + diphosphate + H(+). It functions in the pathway tRNA modification. Catalyzes the ATP-dependent 2-thiolation of cytidine in position 32 of tRNA, to form 2-thiocytidine (s(2)C32). The sulfur atoms are provided by the cysteine/cysteine desulfurase (IscS) system. This chain is tRNA-cytidine(32) 2-sulfurtransferase, found in Burkholderia vietnamiensis (strain G4 / LMG 22486) (Burkholderia cepacia (strain R1808)).